The sequence spans 423 residues: Glutamate-1-semialdehyde 2,1-aminomutase (423 aa).

An N6-(pyridoxal phosphate)lysine modification is found at lysine 266.

This sequence belongs to the class-III pyridoxal-phosphate-dependent aminotransferase family. HemL subfamily. Homodimer. It depends on pyridoxal 5'-phosphate as a cofactor.

The protein resides in the cytoplasm. It catalyses the reaction (S)-4-amino-5-oxopentanoate = 5-aminolevulinate. The protein operates within porphyrin-containing compound metabolism; protoporphyrin-IX biosynthesis; 5-aminolevulinate from L-glutamyl-tRNA(Glu): step 2/2. The chain is Glutamate-1-semialdehyde 2,1-aminomutase from Nitratidesulfovibrio vulgaris (strain DP4) (Desulfovibrio vulgaris).